A 1028-amino-acid polypeptide reads, in one-letter code: Endosome/lysosome-associated apoptosis and autophagy regulator family member 2 (1028 aa).

The signal sequence occupies residues 1 to 47; that stretch reads MLLLTLRRAKGRDRGRPAGGPRRALSLPWSPAWICCWALAGCQAVWA. Over 48 to 928 the chain is Extracellular; it reads GDSSSSGRPL…TCETVDFWLK (881 aa). N-linked (GlcNAc...) asparagine glycosylation is present at Asn168. Disulfide bonds link Cys292–Cys309, Cys322–Cys345, and Cys325–Cys357. 2 N-linked (GlcNAc...) asparagine glycosylation sites follow: Asn404 and Asn690. The region spanning 671 to 876 is the MRH domain; sequence SDCFFYHEKE…LWESAEACPL (206 aa). Cystine bridges form between Cys673-Cys719, Cys729-Cys757, Cys826-Cys862, and Cys838-Cys874. A helical membrane pass occupies residues 929 to 949; that stretch reads VGAGVGAFTAVLLVALTCYFW. Topologically, residues 950-1028 are cytoplasmic; the sequence is KKNQKLEYKY…QLKSSRCPNI (79 aa). Residue Ser1017 is modified to Phosphoserine.

It belongs to the ELAPOR family.

Its subcellular location is the cell membrane. Functionally, functions as a regulator of the BMP signaling pathway and may be involved in epidermal differentiation. The sequence is that of Endosome/lysosome-associated apoptosis and autophagy regulator family member 2 from Mus musculus (Mouse).